The chain runs to 147 residues: Hemoglobin subunit beta (147 aa).

Position 2 is an N-acetylvaline (Val2). Positions His3–His147 constitute a Globin domain. Position 13 is a phosphothreonine (Thr13). The residue at position 45 (Ser45) is a Phosphoserine. Lys60 carries the post-translational modification N6-acetyllysine. A heme b-binding site is contributed by His64. Position 83 is an N6-acetyllysine (Lys83). Residue His93 participates in heme b binding. Cys94 carries the post-translational modification S-nitrosocysteine. Lys145 bears the N6-acetyllysine mark.

The protein belongs to the globin family. Heterotetramer of two alpha chains and two beta chains. As to expression, red blood cells.

Functionally, involved in oxygen transport from the lung to the various peripheral tissues. This Macaca fascicularis (Crab-eating macaque) protein is Hemoglobin subunit beta (HBB).